Here is a 207-residue protein sequence, read N- to C-terminus: Ras-related protein Rab-7a (207 aa).

Thr2 is modified (N-acetylthreonine). GTP-binding residues include Ser17, Gly18, Val19, Gly20, Lys21, Thr22, Ser23, Ser34, Asn35, Tyr37, and Thr40. Position 22 (Thr22) interacts with Mg(2+). A Switch 1 motif is present at residues 28 to 41; it reads YVNKKFSNQYKATI. Residues Thr40 and Asp63 each coordinate Mg(2+). GTP is bound at residue Gly66. Positions 67-82 match the Switch 2 motif; sequence QERFQSLGVAFYRGAD. Residue Ser72 is modified to Phosphoserine. The GTP site is built by Asn125, Lys126, Asp128, Ala156, and Lys157. Residues Lys191 and Lys194 each participate in a glycyl lysine isopeptide (Lys-Gly) (interchain with G-Cter in ubiquitin) cross-link. S-geranylgeranyl cysteine attachment occurs at residues Cys205 and Cys207. Cys207 bears the Cysteine methyl ester mark.

Belongs to the small GTPase superfamily. Rab family. As to quaternary structure, interacts with NTRK1/TRKA. Interacts with RILP. Interacts with PSMA7. Interacts with RNF115. Interacts with FYCO1. Interacts with the PIK3C3/VPS34-PIK3R4 complex. The GTP-bound form interacts with OSBPL1A. The GTP-bound form interacts with RAC1. Interacts with CLN3. Interacts with CHM, the substrate-binding subunit of the Rab geranylgeranyltransferase complex. Interacts with C9orf72. Does not interact with HPS4 and the BLOC-3 complex (heterodimer of HPS1 and HPS4). Interacts with CLN5. Interacts with PLEKHM1 (via N- and C-terminus). Interacts with PRPH; the interaction is direct. Interacts with VPS13A. The GDP-bound form interacts with RIMOC1. Interacts with the MON1A-CCZ1B complex and this interaction is enhanced in the presence of RIMOC1. Interacts with VPS39 and VPS41. Forms a ternary complex with LAMP2 and RUFY4; the interaction with LAMP2 is mediated by RUFY4 (via RUN and coiled coil domains). Mg(2+) serves as cofactor. Deubiquitination at Lys-191 and Lys-194 by USP32. In terms of processing, phosphorylated at Ser-72 by LRRK1; phosphorylation is dependent on protein kinase C (PKC) activation of LRRK1. Post-translationally, prenylated. Prenylation is required for association with cellular membranes.

Its subcellular location is the cytoplasmic vesicle. It is found in the phagosome membrane. The protein localises to the late endosome membrane. The protein resides in the lysosome membrane. It localises to the melanosome membrane. Its subcellular location is the autophagosome membrane. It is found in the lipid droplet. The protein localises to the endosome membrane. The protein resides in the mitochondrion membrane. It carries out the reaction GTP + H2O = GDP + phosphate + H(+). Regulated by guanine nucleotide exchange factors (GEFs) which promote the exchange of bound GDP for free GTP. Regulated by GTPase activating proteins (GAPs) which increase the GTP hydrolysis activity. Inhibited by GDP dissociation inhibitors (GDIs). The small GTPases Rab are key regulators of intracellular membrane trafficking, from the formation of transport vesicles to their fusion with membranes. Rabs cycle between an inactive GDP-bound form and an active GTP-bound form that is able to recruit to membranes different sets of downstream effectors directly responsible for vesicle formation, movement, tethering and fusion. In its active state, RAB7A binds to a variety of effector proteins playing a key role in the regulation of endo-lysosomal trafficking. Governs early-to-late endosomal maturation, microtubule minus-end as well as plus-end directed endosomal migration and positioning, and endosome-lysosome transport through different protein-protein interaction cascades. Also plays a central role in growth-factor-mediated cell signaling, nutrient-transporter-mediated nutrient uptake, neurotrophin transport in the axons of neurons and lipid metabolism. Also involved in regulation of some specialized endosomal membrane trafficking, such as maturation of melanosomes, pathogen-induced phagosomes (or vacuoles) and autophagosomes. Plays a role in the maturation and acidification of phagosomes that engulf pathogens, such as S.aureus and Mycobacteria. Plays a role in the fusion of phagosomes with lysosomes. In concert with RAC1, plays a role in regulating the formation of RBs (ruffled borders) in osteoclasts. Controls the endosomal trafficking and neurite outgrowth signaling of NTRK1/TRKA. Regulates the endocytic trafficking of the EGF-EGFR complex by regulating its lysosomal degradation. Involved in the ADRB2-stimulated lipolysis through lipophagy, a cytosolic lipase-independent autophagic pathway. Required for the exosomal release of SDCBP, CD63 and syndecan. Required for vesicular trafficking and cell surface expression of ACE2. May play a role in PRPH neuronal intermediate filament assembly. In Bos taurus (Bovine), this protein is Ras-related protein Rab-7a (RAB7A).